A 66-amino-acid chain; its full sequence is Large ribosomal subunit protein bL35 (66 aa).

Basic residues predominate over residues 1–26 (MPKMKTHRGSAKRFKKTGSGKLKRSH). The segment at 1-48 (MPKMKTHRGSAKRFKKTGSGKLKRSHAYTSHLFANKSQKQKRKLRKSA) is disordered.

It belongs to the bacterial ribosomal protein bL35 family. Part of the 50S ribosomal subunit.

This Bacillus subtilis (strain 168) protein is Large ribosomal subunit protein bL35.